Here is a 179-residue protein sequence, read N- to C-terminus: Phospholipase A2 (179 aa).

An N-terminal signal peptide occupies residues 1–21 (MHALRSSVLALWLCLHVSVRA). Positions 22–39 (WMTYRSANGLDEYEPEDR) are excised as a propeptide. Ca(2+) is bound by residues Trp-47, Gly-49, and Gly-51. Cystine bridges form between Cys-48–Cys-70, Cys-69–Cys-109, Cys-76–Cys-102, Cys-100–Cys-133, and Cys-142–Cys-150. His-73 is a catalytic residue. Asp-74 serves as a coordination point for Ca(2+). The active site involves Asp-103. Asn-112 carries N-linked (GlcNAc...) asparagine glycosylation.

Ca(2+) serves as cofactor. As to expression, expressed by the venom gland.

It localises to the secreted. The enzyme catalyses a 1,2-diacyl-sn-glycero-3-phosphocholine + H2O = a 1-acyl-sn-glycero-3-phosphocholine + a fatty acid + H(+). PLA2 catalyzes the calcium-dependent hydrolysis of the 2-acyl groups in 3-sn-phosphoglycerides. This chain is Phospholipase A2, found in Xylocopa appendiculata circumvolans (Japanese carpenter bee).